The sequence spans 419 residues: UDP-N-acetylglucosamine 1-carboxyvinyltransferase (419 aa).

Residue 22-23 (KN) participates in phosphoenolpyruvate binding. UDP-N-acetyl-alpha-D-glucosamine is bound at residue arginine 93. The Proton donor role is filled by cysteine 117. Cysteine 117 is modified (2-(S-cysteinyl)pyruvic acid O-phosphothioketal). UDP-N-acetyl-alpha-D-glucosamine-binding residues include aspartate 307 and isoleucine 329.

It belongs to the EPSP synthase family. MurA subfamily.

Its subcellular location is the cytoplasm. The catalysed reaction is phosphoenolpyruvate + UDP-N-acetyl-alpha-D-glucosamine = UDP-N-acetyl-3-O-(1-carboxyvinyl)-alpha-D-glucosamine + phosphate. It functions in the pathway cell wall biogenesis; peptidoglycan biosynthesis. Cell wall formation. Adds enolpyruvyl to UDP-N-acetylglucosamine. This Shewanella putrefaciens (strain CN-32 / ATCC BAA-453) protein is UDP-N-acetylglucosamine 1-carboxyvinyltransferase.